Here is a 303-residue protein sequence, read N- to C-terminus: Cyclin-dependent kinase 1 (303 aa).

A Protein kinase domain is found at 4-287 (YVKIEKIGEG…AREAMTHPYF (284 aa)). Residues 10 to 18 (IGEGTYGVV) and Lys-33 each bind ATP. The residue at position 14 (Thr-14) is a Phosphothreonine. At Tyr-15 the chain carries Phosphotyrosine; by wee1 and wee2. Asp-128 acts as the Proton acceptor in catalysis. Thr-161 is subject to Phosphothreonine; by cak.

Belongs to the protein kinase superfamily. CMGC Ser/Thr protein kinase family. CDC2/CDKX subfamily. Forms a stable but non-covalent complex with cyclin B in mature oocytes. Phosphorylation at Tyr-15 by wee1 and wee2 inhibits the protein kinase activity and acts negative regulator of entry into mitosis (G2 to M transition).

The protein localises to the nucleus. Its subcellular location is the cytoplasm. It localises to the cytoskeleton. It is found in the microtubule organizing center. The protein resides in the centrosome. The enzyme catalyses L-seryl-[protein] + ATP = O-phospho-L-seryl-[protein] + ADP + H(+). It catalyses the reaction L-threonyl-[protein] + ATP = O-phospho-L-threonyl-[protein] + ADP + H(+). The catalysed reaction is [DNA-directed RNA polymerase] + ATP = phospho-[DNA-directed RNA polymerase] + ADP + H(+). Phosphorylation at Thr-14 or Tyr-15 inactivates the enzyme, while phosphorylation at Thr-161 activates it. Plays a key role in the control of the eukaryotic cell cycle by modulating the centrosome cycle as well as mitotic onset; promotes G2-M transition via association with multiple interphase cyclins. During G2 and early mitosis, CDC25A/B/C-mediated dephosphorylation activates CDK1/cyclin complexes which phosphorylate several substrates that trigger at least centrosome separation, Golgi dynamics, nuclear envelope breakdown and chromosome condensation. Once chromosomes are condensed and aligned at the metaphase plate, CDK1 activity is switched off by WEE1- and PKMYT1-mediated phosphorylation to allow sister chromatid separation, chromosome decondensation, reformation of the nuclear envelope and cytokinesis. Catalyzes lamin (LMNA, LMNB1 and LMNB2) phosphorylation at the onset of mitosis, promoting nuclear envelope breakdown. The protein is Cyclin-dependent kinase 1 (cdk1) of Oryzias curvinotus (Hynann ricefish).